The chain runs to 543 residues: Glutamyl-tRNA(Gln) amidotransferase subunit A, chloroplastic/mitochondrial (543 aa).

Catalysis depends on charge relay system residues Lys-123 and Ser-198. The active-site Acyl-ester intermediate is the Ser-222.

The protein belongs to the amidase family. GatA subfamily. Subunit of the heterotrimeric GatCAB amidotransferase (AdT) complex, composed of A, B and C subunits.

It is found in the mitochondrion. The protein localises to the plastid. Its subcellular location is the chloroplast stroma. The catalysed reaction is L-glutamyl-tRNA(Gln) + L-glutamine + ATP + H2O = L-glutaminyl-tRNA(Gln) + L-glutamate + ADP + phosphate + H(+). Functionally, allows the formation of correctly charged Gln-tRNA(Gln) through the transamidation of misacylated Glu-tRNA(Gln) in chloroplasts and mitochondria. The reaction takes place in the presence of glutamine and ATP through an activated gamma-phospho-Glu-tRNA(Gln). This is Glutamyl-tRNA(Gln) amidotransferase subunit A, chloroplastic/mitochondrial from Oryza sativa subsp. indica (Rice).